Consider the following 118-residue polypeptide: Large ribosomal subunit protein bL20 (118 aa).

It belongs to the bacterial ribosomal protein bL20 family.

In terms of biological role, binds directly to 23S ribosomal RNA and is necessary for the in vitro assembly process of the 50S ribosomal subunit. It is not involved in the protein synthesizing functions of that subunit. The chain is Large ribosomal subunit protein bL20 (rplT) from Buchnera aphidicola subsp. Acyrthosiphon pisum (strain APS) (Acyrthosiphon pisum symbiotic bacterium).